A 257-amino-acid chain; its full sequence is Imidazole glycerol phosphate synthase subunit HisF (257 aa).

Residues aspartate 12 and aspartate 131 contribute to the active site.

This sequence belongs to the HisA/HisF family. Heterodimer of HisH and HisF.

Its subcellular location is the cytoplasm. The enzyme catalyses 5-[(5-phospho-1-deoxy-D-ribulos-1-ylimino)methylamino]-1-(5-phospho-beta-D-ribosyl)imidazole-4-carboxamide + L-glutamine = D-erythro-1-(imidazol-4-yl)glycerol 3-phosphate + 5-amino-1-(5-phospho-beta-D-ribosyl)imidazole-4-carboxamide + L-glutamate + H(+). It functions in the pathway amino-acid biosynthesis; L-histidine biosynthesis; L-histidine from 5-phospho-alpha-D-ribose 1-diphosphate: step 5/9. IGPS catalyzes the conversion of PRFAR and glutamine to IGP, AICAR and glutamate. The HisF subunit catalyzes the cyclization activity that produces IGP and AICAR from PRFAR using the ammonia provided by the HisH subunit. This is Imidazole glycerol phosphate synthase subunit HisF from Hydrogenovibrio crunogenus (strain DSM 25203 / XCL-2) (Thiomicrospira crunogena).